We begin with the raw amino-acid sequence, 550 residues long: Centrosomal and chromosomal factor (550 aa).

3 coiled-coil regions span residues Ser-20–His-44, Val-105–Gln-126, and Ala-239–His-274. 4 disordered regions span residues Ala-21–Ser-145, Leu-208–Asn-320, Ser-361–Met-380, and Ser-392–Val-465. Composition is skewed to low complexity over residues Ala-24 to Gln-71, Ala-81 to Pro-136, and Ala-221 to Asn-320. Low complexity-rich tracts occupy residues Gln-396–Cys-412 and Ser-450–Ser-462.

In terms of assembly, homodimer. Interacts with esc, Trl, E(z), scm and ph-p in vitro. Found in vivo in an esc-containing complex, which may be the Esc/E(z) complex. Also found in vivo in a Pc-containing complex that may be the PRC1 complex, but does not interact with Pc directly. Interacts with cyclin CycG.

The protein resides in the nucleus. Its subcellular location is the cytoplasm. It localises to the cytoskeleton. It is found in the microtubule organizing center. The protein localises to the centrosome. The protein resides in the chromosome. In terms of biological role, essential protein required for proper condensation of mitotic chromosomes and progression through mitosis. Binds to specific polytene chromosome sites, many of which are shared with the posterior sex combs (Psc) protein. Involved in maintaining Abd-B repression outside its normal expression domain. The chain is Centrosomal and chromosomal factor (corto) from Drosophila melanogaster (Fruit fly).